Consider the following 169-residue polypeptide: Allophycocyanin subunit beta-18 (169 aa).

N4-methylasparagine is present on asparagine 72. Cysteine 82 contacts (2R,3E)-phycocyanobilin.

The protein belongs to the phycobiliprotein family. In terms of assembly, heterodimer of an alpha and a beta chain. Contains one covalently linked bilin chromophore.

The protein resides in the plastid. It is found in the chloroplast thylakoid membrane. Functionally, light-harvesting photosynthetic bile pigment-protein from the phycobiliprotein complex. Allophycocyanin has a maximum absorption at approximately 650 nanometers. This chain is Allophycocyanin subunit beta-18 (apcF), found in Porphyra purpurea (Red seaweed).